Here is a 300-residue protein sequence, read N- to C-terminus: Transcription factor E2F5 (300 aa).

The DNA-binding element occupies 2–73; the sequence is GSSRHEKSLG…KNSIQWKGVG (72 aa). The interval 31-53 is leucine-zipper; that stretch reads LKAAADTLAVRQKRRIYDITNVL. A DEF box motif is present at residues 36-73; sequence DTLAVRQKRRIYDITNVLEGIDLIEKKSKNSIQWKGVG. The tract at residues 74-170 is dimerization; the sequence is AGCNTKEVID…GQNGQKKYQI (97 aa). A disordered region spans residues 191–250; the sequence is SKPVVFPVPPPDDLTQPSSQSSTSVTPPKSTMAAQNLPEQHVSERSQNFQQTPATEISSG. A compositionally biased stretch (low complexity) spans 203-221; the sequence is DLTQPSSQSSTSVTPPKST. A compositionally biased stretch (polar residues) spans 235–246; that stretch reads RSQNFQQTPATE. The interval 242–300 is transactivation; that stretch reads TPATEISSGSISGDIIDELMSSDVFPLLRLSPTPADDYNFNLDDNEGVCDLFDVQILNY. Positions 277-294 are RBL2 association; it reads DDYNFNLDDNEGVCDLFD.

It belongs to the E2F/DP family. In terms of assembly, component of the DRTF1/E2F transcription factor complex. Binds cooperatively with DP-1 to E2F sites. Interaction with retinoblastoma protein RB1 or proteins RBL1 and RBL2 inhibits the E2F transactivation domain. Component of the DREAM complex (also named LINC complex) at least composed of E2F4, E2F5, LIN9, LIN37, LIN52, LIN54, MYBL1, MYBL2, RBL1, RBL2, RBBP4, TFDP1 and TFDP2. The complex exists in quiescent cells where it represses cell cycle-dependent genes. It dissociates in S phase when LIN9, LIN37, LIN52 and LIN54 form a subcomplex that binds to MYBL2. Found in placenta followed by kidney, lung and brain.

It localises to the nucleus. In terms of biological role, transcriptional activator that binds to E2F sites, these sites are present in the promoter of many genes whose products are involved in cell proliferation. May mediate growth factor-initiated signal transduction. It is likely involved in the early responses of resting cells to growth factor stimulation. Specifically required for multiciliate cell differentiation: together with MCIDAS and E2F5, binds and activate genes required for centriole biogenesis. The protein is Transcription factor E2F5 (E2f5) of Rattus norvegicus (Rat).